A 276-amino-acid polypeptide reads, in one-letter code: Large ribosomal subunit protein uL2c (276 aa).

Disordered regions lie at residues 1 to 51 (MAIR…GIIT) and 224 to 276 (VVMN…RRRK). Composition is skewed to polar residues over residues 7–18 (RTYTPSTRNRPI) and 27–37 (SNPQKKLTSGQ).

The protein belongs to the universal ribosomal protein uL2 family. As to quaternary structure, part of the 50S ribosomal subunit.

The protein localises to the plastid. Its subcellular location is the chloroplast. The protein is Large ribosomal subunit protein uL2c (rpl2) of Cycas taitungensis (Prince sago).